The primary structure comprises 461 residues: Hydroxyproline dehydrogenase (461 aa).

Lys-310 is modified (N6-acetyllysine).

Belongs to the proline oxidase family. FAD serves as cofactor.

The enzyme catalyses trans-4-hydroxy-L-proline + a quinone = (3R,5S)-1-pyrroline-3-hydroxy-5-carboxylate + a quinol + H(+). It carries out the reaction L-proline + a quinone = (S)-1-pyrroline-5-carboxylate + a quinol + H(+). It participates in amino-acid degradation; L-proline degradation into L-glutamate; L-glutamate from L-proline: step 1/2. Functionally, dehydrogenase that converts trans-4-L-hydroxyproline to delta-1-pyrroline-3-hydroxy-5-carboxylate (Hyp) using ubiquinone-10 as the terminal electron acceptor. Can also use proline as a substrate but with a very much lower efficiency. Does not react with other diastereomers of Hyp: trans-4-D-hydroxyproline and cis-4-L-hydroxyproline. Ubiquininone analogs such as menadione, duroquinone and ubiquinone-1 react more efficiently than oxygen as the terminal electron acceptor during catalysis. The polypeptide is Hydroxyproline dehydrogenase (Bos taurus (Bovine)).